The chain runs to 353 residues: AA9 family lytic polysaccharide monooxygenase A (353 aa).

A signal peptide spans 1–19 (MKSTFGLLALAAAAKMAHA). His20 and His102 together coordinate Cu(2+). The cysteines at positions 62 and 183 are disulfide-linked. Residue His169 participates in O2 binding. Cu(2+) is bound at residue Tyr180. The segment covering 266 to 276 (KPTTTTAAAPA) has biased composition (low complexity). The segment at 266–316 (KPTTTTAAAPAETDSCDGDDDDYETETPAPQASATQAPAPQRPAPQTPSGS) is disordered. A compositionally biased stretch (acidic residues) spans 279-290 (DSCDGDDDDYET). A compositionally biased stretch (low complexity) spans 291–304 (ETPAPQASATQAPA). In terms of domain architecture, CBM1 spans 315-351 (GSVKEWYQCGGINYTGAKNCESGLVCKEWNPYYHQCI). Residue Asn327 is glycosylated (N-linked (GlcNAc...) asparagine).

The protein belongs to the polysaccharide monooxygenase AA9 family. Requires Cu(2+) as cofactor.

It localises to the secreted. The enzyme catalyses [(1-&gt;4)-beta-D-glucosyl]n+m + reduced acceptor + O2 = 4-dehydro-beta-D-glucosyl-[(1-&gt;4)-beta-D-glucosyl]n-1 + [(1-&gt;4)-beta-D-glucosyl]m + acceptor + H2O.. Lytic polysaccharide monooxygenase (LPMO) that depolymerizes crystalline and amorphous polysaccharides via the oxidation of scissile alpha- or beta-(1-4)-glycosidic bonds, yielding C4 oxidation products. Catalysis by LPMOs requires the reduction of the active-site copper from Cu(II) to Cu(I) by a reducing agent and H(2)O(2) or O(2) as a cosubstrate. The sequence is that of AA9 family lytic polysaccharide monooxygenase A (eglD) from Aspergillus clavatus (strain ATCC 1007 / CBS 513.65 / DSM 816 / NCTC 3887 / NRRL 1 / QM 1276 / 107).